A 484-amino-acid polypeptide reads, in one-letter code: Probable metalloprotease ARX1 (484 aa).

The protein belongs to the peptidase M24 family. As to quaternary structure, component of the nucleoplasmic and cytoplasmic pre-60S ribosomal particles.

Its subcellular location is the cytoplasm. It is found in the nucleus. In terms of biological role, probable metalloprotease involved in proper assembly of pre-ribosomal particles during the biogenesis of the 60S ribosomal subunit. Accompanies the pre-60S particles to the cytoplasm. The polypeptide is Probable metalloprotease ARX1 (ARX1) (Yarrowia lipolytica (strain CLIB 122 / E 150) (Yeast)).